The following is a 452-amino-acid chain: Pup--protein ligase (452 aa).

Residue glutamate 9 coordinates Mg(2+). Arginine 53 serves as a coordination point for ATP. Position 55 (tyrosine 55) interacts with Mg(2+). Aspartate 57 (proton acceptor) is an active-site residue. Glutamate 63 is a Mg(2+) binding site. ATP-binding residues include threonine 66 and tryptophan 419.

This sequence belongs to the Pup ligase/Pup deamidase family. Pup-conjugating enzyme subfamily.

The catalysed reaction is ATP + [prokaryotic ubiquitin-like protein]-L-glutamate + [protein]-L-lysine = ADP + phosphate + N(6)-([prokaryotic ubiquitin-like protein]-gamma-L-glutamyl)-[protein]-L-lysine.. Its pathway is protein degradation; proteasomal Pup-dependent pathway. The protein operates within protein modification; protein pupylation. Its function is as follows. Catalyzes the covalent attachment of the prokaryotic ubiquitin-like protein modifier Pup to the proteasomal substrate proteins, thereby targeting them for proteasomal degradation. This tagging system is termed pupylation. The ligation reaction involves the side-chain carboxylate of the C-terminal glutamate of Pup and the side-chain amino group of a substrate lysine. This Mycolicibacterium gilvum (strain PYR-GCK) (Mycobacterium gilvum (strain PYR-GCK)) protein is Pup--protein ligase.